A 127-amino-acid chain; its full sequence is D-ribose pyranase (127 aa).

H20 (proton donor) is an active-site residue. Substrate contacts are provided by residues D28, H94, and 116–118 (YSN).

The protein belongs to the RbsD / FucU family. RbsD subfamily. Homodecamer.

It localises to the cytoplasm. It carries out the reaction beta-D-ribopyranose = beta-D-ribofuranose. Its pathway is carbohydrate metabolism; D-ribose degradation; D-ribose 5-phosphate from beta-D-ribopyranose: step 1/2. Functionally, catalyzes the interconversion of beta-pyran and beta-furan forms of D-ribose. The sequence is that of D-ribose pyranase from Cutibacterium acnes (strain DSM 16379 / KPA171202) (Propionibacterium acnes).